Here is a 329-residue protein sequence, read N- to C-terminus: Ribosomal protein L11 methyltransferase (329 aa).

S-adenosyl-L-methionine is bound by residues threonine 177, glycine 198, aspartate 220, and asparagine 264.

The protein belongs to the methyltransferase superfamily. PrmA family.

Its subcellular location is the cytoplasm. The catalysed reaction is L-lysyl-[protein] + 3 S-adenosyl-L-methionine = N(6),N(6),N(6)-trimethyl-L-lysyl-[protein] + 3 S-adenosyl-L-homocysteine + 3 H(+). Methylates ribosomal protein L11. In Helicobacter pylori (strain Shi470), this protein is Ribosomal protein L11 methyltransferase.